The chain runs to 246 residues: MTDSDNPRRVLLKLSGEAFGGGKVGIDTQVIRRIAEEIVPAVQQGVQVAIVVGGGNFFRGAELQQAGIDRSRGDYMGMLGTVMNCLALQDFLEQEGQATRVQTAITMGQVAEPYIPLKAIRHLEKGRVVIFGAGAGMPYFSTDTVSIQRSLEIHCDEVLMGKNGVDGVYTADPRKDENAKRFETLSYNRALVDNLAVMDASALSMARDNKKRIRVFGLEEPGNVTRALVGDEIGTLVSTAESRVAE.

Position 13-16 (13-16 (KLSG)) interacts with ATP. UMP is bound at residue G54. ATP is bound by residues G55 and R59. UMP contacts are provided by residues D74 and 135-142 (AGMPYFST). 3 residues coordinate ATP: N163, Y169, and D172.

Belongs to the UMP kinase family. As to quaternary structure, homohexamer.

The protein resides in the cytoplasm. The catalysed reaction is UMP + ATP = UDP + ADP. Its pathway is pyrimidine metabolism; CTP biosynthesis via de novo pathway; UDP from UMP (UMPK route): step 1/1. Its activity is regulated as follows. Inhibited by UTP. Catalyzes the reversible phosphorylation of UMP to UDP. In Bifidobacterium longum (strain NCC 2705), this protein is Uridylate kinase.